The following is a 470-amino-acid chain: Aromatic amino acid aminotransferase C569.07 (470 aa).

It belongs to the class-I pyridoxal-phosphate-dependent aminotransferase family. The cofactor is pyridoxal 5'-phosphate.

It localises to the cytoplasm. It carries out the reaction an aromatic L-alpha-amino acid + 2-oxoglutarate = an aromatic oxo-acid + L-glutamate. Its function is as follows. Has aromatic amino acid transaminase activity. The polypeptide is Aromatic amino acid aminotransferase C569.07 (Schizosaccharomyces pombe (strain 972 / ATCC 24843) (Fission yeast)).